The primary structure comprises 103 residues: Small ribosomal subunit protein uS10 (103 aa).

This sequence belongs to the universal ribosomal protein uS10 family. In terms of assembly, part of the 30S ribosomal subunit.

Its function is as follows. Involved in the binding of tRNA to the ribosomes. This is Small ribosomal subunit protein uS10 from Haemophilus ducreyi (strain 35000HP / ATCC 700724).